The primary structure comprises 83 residues: Large ribosomal subunit protein eL43 (83 aa).

4 residues coordinate Zn(2+): Cys38, Cys41, Cys56, and Cys59. Residues 38 to 59 (CPVCGRRAVRRISTGIWQCKKC) form a C4-type zinc finger.

The protein belongs to the eukaryotic ribosomal protein eL43 family. Putative zinc-binding subfamily. Part of the 50S ribosomal subunit. It depends on Zn(2+) as a cofactor.

In terms of biological role, binds to the 23S rRNA. This Pyrococcus abyssi (strain GE5 / Orsay) protein is Large ribosomal subunit protein eL43.